A 409-amino-acid chain; its full sequence is Tyrosine--tRNA ligase (409 aa).

The 'HIGH' region signature appears at 54-63 (PTAPDIHLGH). The short motif at 238-242 (KMSKS) is the 'KMSKS' region element. An ATP-binding site is contributed by lysine 241. Residues 347-407 (QGILRILREA…GKRKFARVKL (61 aa)) enclose the S4 RNA-binding domain.

It belongs to the class-I aminoacyl-tRNA synthetase family. TyrS type 2 subfamily. Homodimer.

It localises to the cytoplasm. The enzyme catalyses tRNA(Tyr) + L-tyrosine + ATP = L-tyrosyl-tRNA(Tyr) + AMP + diphosphate + H(+). Its function is as follows. Catalyzes the attachment of tyrosine to tRNA(Tyr) in a two-step reaction: tyrosine is first activated by ATP to form Tyr-AMP and then transferred to the acceptor end of tRNA(Tyr). This is Tyrosine--tRNA ligase from Bordetella pertussis (strain Tohama I / ATCC BAA-589 / NCTC 13251).